The primary structure comprises 542 residues: CTP synthase (542 aa).

Positions 1–265 (MARYVFITGG…DSEVLSAFGI (265 aa)) are amidoligase domain. A CTP-binding site is contributed by Ser-13. Ser-13 is a UTP binding site. 14 to 19 (SLGKGI) provides a ligand contact to ATP. L-glutamine is bound at residue Tyr-54. Residue Asp-71 participates in ATP binding. Mg(2+) contacts are provided by Asp-71 and Glu-139. CTP contacts are provided by residues 146–148 (DIE), 186–191 (KTKPTQ), and Lys-222. Residues 186–191 (KTKPTQ) and Lys-222 contribute to the UTP site. Positions 291-541 (TIAVVGKYTG…IEAAIEQSRL (251 aa)) constitute a Glutamine amidotransferase type-1 domain. Gly-353 is an L-glutamine binding site. Cys-380 serves as the catalytic Nucleophile; for glutamine hydrolysis. L-glutamine-binding positions include 381 to 384 (FGMQ), Glu-404, and Arg-469. Catalysis depends on residues His-514 and Glu-516.

The protein belongs to the CTP synthase family. Homotetramer.

It catalyses the reaction UTP + L-glutamine + ATP + H2O = CTP + L-glutamate + ADP + phosphate + 2 H(+). The enzyme catalyses L-glutamine + H2O = L-glutamate + NH4(+). The catalysed reaction is UTP + NH4(+) + ATP = CTP + ADP + phosphate + 2 H(+). It participates in pyrimidine metabolism; CTP biosynthesis via de novo pathway; CTP from UDP: step 2/2. With respect to regulation, allosterically activated by GTP, when glutamine is the substrate; GTP has no effect on the reaction when ammonia is the substrate. The allosteric effector GTP functions by stabilizing the protein conformation that binds the tetrahedral intermediate(s) formed during glutamine hydrolysis. Inhibited by the product CTP, via allosteric rather than competitive inhibition. Catalyzes the ATP-dependent amination of UTP to CTP with either L-glutamine or ammonia as the source of nitrogen. Regulates intracellular CTP levels through interactions with the four ribonucleotide triphosphates. The chain is CTP synthase from Brucella melitensis biotype 2 (strain ATCC 23457).